A 955-amino-acid chain; its full sequence is Leucine--tRNA ligase (955 aa).

The 'HIGH' region motif lies at 51–61; it reads PYLNGVLHAGH. The short motif at 647–651 is the 'KMSKS' region element; it reads KLSKS. An ATP-binding site is contributed by Lys650.

Belongs to the class-I aminoacyl-tRNA synthetase family.

Its subcellular location is the cytoplasm. It carries out the reaction tRNA(Leu) + L-leucine + ATP = L-leucyl-tRNA(Leu) + AMP + diphosphate. This chain is Leucine--tRNA ligase, found in Methanococcus maripaludis (strain DSM 14266 / JCM 13030 / NBRC 101832 / S2 / LL).